Reading from the N-terminus, the 345-residue chain is Anthranilate phosphoribosyltransferase (345 aa).

5-phospho-alpha-D-ribose 1-diphosphate contacts are provided by residues G80, 83–84, T88, 90–93, 108–116, and S120; these read GD, NIST, and KHGNRSVSS. An anthranilate-binding site is contributed by G80. S92 contributes to the Mg(2+) binding site. N111 is an anthranilate binding site. Anthranilate is bound at residue R166. Mg(2+)-binding residues include D225 and E226.

This sequence belongs to the anthranilate phosphoribosyltransferase family. Homodimer. It depends on Mg(2+) as a cofactor.

The enzyme catalyses N-(5-phospho-beta-D-ribosyl)anthranilate + diphosphate = 5-phospho-alpha-D-ribose 1-diphosphate + anthranilate. Its pathway is amino-acid biosynthesis; L-tryptophan biosynthesis; L-tryptophan from chorismate: step 2/5. Its function is as follows. Catalyzes the transfer of the phosphoribosyl group of 5-phosphorylribose-1-pyrophosphate (PRPP) to anthranilate to yield N-(5'-phosphoribosyl)-anthranilate (PRA). The sequence is that of Anthranilate phosphoribosyltransferase from Desulforamulus reducens (strain ATCC BAA-1160 / DSM 100696 / MI-1) (Desulfotomaculum reducens).